We begin with the raw amino-acid sequence, 315 residues long: MAPQRRGPPRVPEGNSAAERRHANSTKKDRLPQEAQRTWLRIVALGVSLALVTFLLWSSAGIDDDVAEVVAHRGEVLEGRFIEVPCSEDYDGHRRFEGCTPRKCGRGVTDIVITREEAEQIRRIAEKGLSLGGSDGGASILDLHSGALSVGKHFVNLYRYFGDKIQTIFSEEDFQLYRDIRQKVQLTIAEAFGIRASLLYLTKPTFFSRINSTEAQTAHDEYWHAHVDKVTYGSFDYTSLLYLSDYLEDFGGGRFVFMEEGSNKTVEPRAGRVSFFTSGSENLHRVEKVLWGTRYAITIAFTCNPDHGIEDPVLT.

The tract at residues 1–32 (MAPQRRGPPRVPEGNSAAERRHANSTKKDRLP) is disordered. At 1–41 (MAPQRRGPPRVPEGNSAAERRHANSTKKDRLPQEAQRTWLR) the chain is on the cytoplasmic side. Residues 18-32 (AERRHANSTKKDRLP) are compositionally biased toward basic and acidic residues. The helical; Signal-anchor for type II membrane protein transmembrane segment at 42–62 (IVALGVSLALVTFLLWSSAGI) threads the bilayer. Topologically, residues 63-315 (DDDVAEVVAH…DHGIEDPVLT (253 aa)) are lumenal. The region spanning 203-305 (KPTFFSRINS…AITIAFTCNP (103 aa)) is the Fe2OG dioxygenase domain. An N-linked (GlcNAc...) asparagine glycan is attached at N211. Residues H226 and D228 each contribute to the Fe cation site. N263 is a glycosylation site (N-linked (GlcNAc...) asparagine). H284 lines the Fe cation pocket. The active site involves R294. R294 serves as a coordination point for 2-oxoglutarate.

The protein belongs to the OGFOD3 family. Fe(2+) serves as cofactor. Requires L-ascorbate as cofactor.

The protein localises to the membrane. This chain is 2-oxoglutarate and iron-dependent oxygenase domain-containing protein 3 (Ogfod3), found in Rattus norvegicus (Rat).